The chain runs to 394 residues: Protein arginine N-methyltransferase 8 (394 aa).

Gly2 is lipidated: N-myristoyl glycine. The interval 16–40 (MAENAAESTEVNSPPSQPPQPVVPA) is disordered. Short sequence motifs (SH3-binding) lie at residues 29-42 (PPSQ…PAKP) and 53-58 (PSCPGR). Residues 30–39 (PSQPPQPVVP) show a composition bias toward pro residues. Omega-N-methylarginine; by autocatalysis is present on Arg58. Position 73 is an asymmetric dimethylarginine; by autocatalysis (Arg73). Positions 73-394 (RDYYFDSYAH…TSVSNDYKMR (322 aa)) constitute an SAM-dependent MTase PRMT-type domain. S-adenosyl-L-methionine is bound by residues His86, Arg95, Gly119, 119-122 (GSGT), Glu141, and Glu170. Residues Glu185 and Glu194 contribute to the active site.

It belongs to the class I-like SAM-binding methyltransferase superfamily. Protein arginine N-methyltransferase family. PRMT8 subfamily. As to quaternary structure, homodimer. Tetramer; individual homodimers associates to form a homotetramer. Homooctamer; individual homodimers associates to form a homooctamer and homooligomerization is required for proper localization to the cell membrane. Heterodimer with PRMT1; heterodimerization may recruit PRMT1 activity to the plasma membrane. Interacts with PRMT2 (via the SH3 domain). Interacts with FYN (via the SH3 domain). Interacts with EWS; independently of EWS methylation status. Brain-specific.

The protein localises to the cell membrane. It catalyses the reaction L-arginyl-[protein] + S-adenosyl-L-methionine = N(omega)-methyl-L-arginyl-[protein] + S-adenosyl-L-homocysteine + H(+). It carries out the reaction L-arginyl-[protein] + 2 S-adenosyl-L-methionine = N(omega),N(omega)-dimethyl-L-arginyl-[protein] + 2 S-adenosyl-L-homocysteine + 2 H(+). S-adenosyl-L-methionine-dependent and membrane-associated arginine methyltransferase that can both catalyze the formation of omega-N monomethylarginine (MMA) and asymmetrical dimethylarginine (aDMA) in proteins such as NIFK, myelin basic protein, histone H4, H2A and H2A/H2B dimer. Able to mono- and dimethylate EWS protein; however its precise role toward EWS remains unclear as it still interacts with fully methylated EWS. The polypeptide is Protein arginine N-methyltransferase 8 (Homo sapiens (Human)).